The chain runs to 665 residues: Anaphase-promoting complex subunit 3 (665 aa).

Residues 115 to 148 (SCMLDVLGTMYKKAGFLKKATDCFVEAVSINPYN) form a TPR 1 repeat. A DNA-binding region spans residues 191-257 (VPEPSFLKKS…HQSLKLQSQS (67 aa)). TPR repeat units follow at residues 329–362 (LLKL…QQNT), 363–396 (PFVL…SPSR), 431–464 (PESW…DPTF), 466–498 (YAYT…NVRH), 499–532 (YNAW…NPNN), 534–566 (VLIT…DEKS), 568–600 (LARF…APDE), and 601–634 (ANVH…DGKA).

This sequence belongs to the APC3/CDC27 family. The APC/C is composed of at least 13 subunits: apc1, apc2, nuc2, apc4, apc5, cut9, apc8, apc10, apc11, hcn1, apc13, apc14 and apc15. Interacts with apc10 and cut9.

It is found in the nucleus. Functionally, component of the anaphase-promoting complex/cyclosome (APC/C), a cell cycle-regulated E3 ubiquitin-protein ligase complex that controls progression through mitosis and the G1 phase of the cell cycle. The APC/C is thought to confer substrate specificity and, in the presence of ubiquitin-conjugating E2 enzymes, it catalyzes the formation of protein-ubiquitin conjugates that are subsequently degraded by the 26S proteasome. Interacts with spindle apparatus, chromosomes, or nuclear envelope, and interconnect nuclear and cytoskeletal functions in mitosis, so the elongation of the spindle in anaphase is blocked. The polypeptide is Anaphase-promoting complex subunit 3 (nuc2) (Schizosaccharomyces pombe (strain 972 / ATCC 24843) (Fission yeast)).